The sequence spans 81 residues: Trefoil factor 1 (81 aa).

The N-terminal stretch at 1–23 is a signal peptide; it reads MEHRVIYVLVLVCALTLSSLAQG. The P-type domain occupies 26 to 69; the sequence is ETCTVAPHHRDNCGSPGITPSQCKDKGCCFDNTVRGVPWCYYPV. 3 disulfide bridges follow: Cys28–Cys54, Cys38–Cys53, and Cys48–Cys65.

Its subcellular location is the secreted. In terms of biological role, stabilizer of the mucous gel overlying the gastrointestinal mucosa that provides a physical barrier against various noxious agents. This chain is Trefoil factor 1 (TFF1), found in Canis lupus familiaris (Dog).